The following is a 232-amino-acid chain: Zinc-finger homeodomain protein 5 (232 aa).

The span at 1-11 (MELSEHEEDAG) shows a compositional bias: acidic residues. The interval 1 to 25 (MELSEHEEDAGDVGGGCSSPPTPPH) is disordered. The ZF-HD dimerization-type; degenerate zinc finger occupies 40 to 86 (YHECLRNHAAASGGHVVDGCGEFMPASTEEPLACAACGCHRSFHRRD). Residues 126–170 (GLPFPGYGTPSGGTGTTTASSSDERLRPSPVQPRRRSRTTFTREQ) are disordered. Residues 159–222 (RRRSRTTFTR…NNKHSFKQKQ (64 aa)) constitute a DNA-binding region (homeobox).

Homo- and heterodimer with other ZFHD proteins.

Its subcellular location is the nucleus. Putative transcription factor. The polypeptide is Zinc-finger homeodomain protein 5 (ZHD5) (Oryza sativa subsp. japonica (Rice)).